The sequence spans 1154 residues: Diacylglycerol kinase eta (1154 aa).

The disordered stretch occupies residues 1–54 (MAGAGYQHHPPGGAAVGTSAVSPTAAGPGEDSSDSEAEQGGPQKLIRKVSTSGQ). The 94-residue stretch at 59-152 (TSIKEGQLLK…WISSLKSVQS (94 aa)) folds into the PH domain. Phorbol-ester/DAG-type zinc fingers lie at residues 169-219 (MHNW…TNNC) and 241-292 (PHQW…HPVC). A DAGKc domain is found at 322–457 (FCVSPLLVFV…LDRWSIMTYE (136 aa)). 3 disordered regions span residues 560 to 608 (QASR…AVKP), 634 to 678 (DEQT…APEA), and 1123 to 1154 (FKMEKAQKQKTSSQPGPGDTESGSYEANSPGN). The segment covering 573–586 (PEEDAVESSSEESL) has biased composition (acidic residues). Positions 656–667 (DDSKDNDTKESP) are enriched in basic and acidic residues. Residues 1131–1154 (QKTSSQPGPGDTESGSYEANSPGN) show a composition bias toward polar residues.

Belongs to the eukaryotic diacylglycerol kinase family. As to quaternary structure, interacts with RAF1 and BRAF. In terms of processing, phosphorylated. Phosphorylation does not inhibit catalytic activity. As to expression, expressed in a wide variety of tissues. Most abundant in the brain and testis; also found in lung, spleen, and prostate (at protein level).

It localises to the cytoplasm. The protein resides in the cell membrane. It catalyses the reaction a 1,2-diacyl-sn-glycerol + ATP = a 1,2-diacyl-sn-glycero-3-phosphate + ADP + H(+). The enzyme catalyses 1,2-di-(9Z-octadecenoyl)-sn-glycerol + ATP = 1,2-di-(9Z-octadecenoyl)-sn-glycero-3-phosphate + ADP + H(+). It participates in lipid metabolism; glycerolipid metabolism. Its function is as follows. Diacylglycerol kinase that converts diacylglycerol/DAG into phosphatidic acid/phosphatidate/PA and regulates the respective levels of these two bioactive lipids. Thereby, acts as a central switch between the signaling pathways activated by these second messengers with different cellular targets and opposite effects in numerous biological processes. Plays a key role in promoting cell growth. Activates the Ras/B-Raf/C-Raf/MEK/ERK signaling pathway induced by EGF. Regulates the recruitment of RAF1 and BRAF from cytoplasm to membranes and their heterodimerization. In Mesocricetus auratus (Golden hamster), this protein is Diacylglycerol kinase eta (DGKH).